We begin with the raw amino-acid sequence, 275 residues long: Large ribosomal subunit protein uL2 (275 aa).

Residues 224-257 (AMNPIDHPHGGGEGRTAAGRDPVSPWGTPTKGFR) form a disordered region.

The protein belongs to the universal ribosomal protein uL2 family. As to quaternary structure, part of the 50S ribosomal subunit. Forms a bridge to the 30S subunit in the 70S ribosome.

Its function is as follows. One of the primary rRNA binding proteins. Required for association of the 30S and 50S subunits to form the 70S ribosome, for tRNA binding and peptide bond formation. It has been suggested to have peptidyltransferase activity; this is somewhat controversial. Makes several contacts with the 16S rRNA in the 70S ribosome. The sequence is that of Large ribosomal subunit protein uL2 from Burkholderia mallei (strain NCTC 10247).